A 450-amino-acid chain; its full sequence is Succinate-semialdehyde dehydrogenase (450 aa).

Residue 119-120 coordinates NADP(+); it reads WN. Arg128 serves as a coordination point for substrate. NADP(+) is bound by residues 143–146 and 197–198; these read KPAK and GS. The Proton acceptor role is filled by Glu219. Position 220 (Leu220) interacts with NADP(+). Arg247 and Cys253 together coordinate substrate. Cys253 acts as the Nucleophile in catalysis. Glu350 is a binding site for NADP(+). Ser410 provides a ligand contact to substrate.

The protein belongs to the aldehyde dehydrogenase family. As to quaternary structure, homodimer.

The catalysed reaction is succinate semialdehyde + NAD(+) + H2O = succinate + NADH + 2 H(+). It catalyses the reaction succinate semialdehyde + NADP(+) + H2O = succinate + NADPH + 2 H(+). Its pathway is alkaloid degradation; nicotine degradation. Functionally, catalyzes the NAD(P)(+)-dependent oxidation of succinate semialdehyde to succinate, which may enter the citric acid cycle. Is involved in the catabolism of 4-methylaminobutanoate produced from nicotine. Acts preferentially with NADP(+) as cosubstrate but can also use NAD(+). To a lesser extent, is active also towards butyraldehyde (8.5% of the activity observed with succinate semialdehyde) and propionaldehyde (1.6% of the activity observed with succinate semialdehyde) as substrates. This is Succinate-semialdehyde dehydrogenase (sad) from Paenarthrobacter nicotinovorans (Arthrobacter nicotinovorans).